The sequence spans 489 residues: WD repeat-containing protein JIP5 (489 aa).

Residues 4–45 (PLSSDALDLCFHPAAETNLLAVGLISGKIQLINYDDYLSSPS) form a WD 1 repeat. A disordered region spans residues 46-66 (SSRTPLAPPSKKSKPSTISSA). The WD 2 repeat unit spans residues 124–163 (EVHDAAPSRVLPVDESLVVTGDDDGVVRLWDVRKGGGKGI). Residues 192-246 (SIKEAKKSKTQLKKQRRRARQAERLKEHDKEKREQNASDTEASEPDSEDDAAIKV) are disordered. The span at 199–210 (SKTQLKKQRRRA) shows a compositional bias: basic residues. Residues 211–227 (RQAERLKEHDKEKREQN) are compositionally biased toward basic and acidic residues. Residues 232–241 (EASEPDSEDD) are compositionally biased toward acidic residues. WD repeat units lie at residues 279–318 (DQED…LDHV) and 323–363 (GHPA…GVIA). A disordered region spans residues 417 to 489 (IVGLAEDDSD…AGKGGFFSDL (73 aa)). 2 stretches are compositionally biased toward acidic residues: residues 421–440 (AEDD…DDDD) and 449–472 (DGAE…DSED).

It belongs to the WD repeat WDR55 family.

The protein localises to the nucleus. It localises to the nucleolus. The chain is WD repeat-containing protein JIP5 (JIP5) from Mycosarcoma maydis (Corn smut fungus).